An 899-amino-acid polypeptide reads, in one-letter code: Probable disease resistance protein RXW24L (899 aa).

The stretch at 13–50 forms a coiled coil; sequence DRLSQEYDQFKGVEDQVTELKSNLNLLKSFLKDADAKK. An NB-ARC domain is found at 143–455; that stretch reads LQERQREMRH…AEGISERRRY (313 aa). Position 189–196 (189–196) interacts with ATP; that stretch reads GMGGLGKT.

Belongs to the disease resistance NB-LRR family.

Its function is as follows. Potential disease resistance protein. The chain is Probable disease resistance protein RXW24L (RXW24L) from Arabidopsis thaliana (Mouse-ear cress).